The sequence spans 842 residues: MSRPLTDQEKRKQISVRGLAGVENVTELKKNFNRHLHFTLVKDRNVATPRDYYFALAYTVRDHLVGRWIRTQQHYYEKDPKRIYYLSLEFYIGRTLQNTMVNLALENACDEATYQLGLDMEELEEIEEDAGLGNGGLGRLAACFLDSMATLGLAAYGYGIRYEFGIFNQKISGGWQMEEADDWLRYGNPWEKARPEFTLPVHFYGRVEHTSQGAKWVDTQVVLAMPYDTPVPGYRNNVVNTMRLWSAKAPNDFNLKDFNVGGYIQAVLDRNLAENISRVLYPNDNFFEGKELRLKQEYFVVAATLQDIIRRFKSSKFGCLDPVRTNFDAFPDKVAIQLNDTHPSLAIPELMRILVDQERLEWEKAWEVTVKTCAYTNHTVLPEALERWPVHLIETLLPRHLQIIYEINQRFLNRVAAAFPGDVDRLRRMSLVEEGAVKRINMAHLCIAGSHAVNGVARIHSEILKKTIFKDFYELEPHKFQNKTNGITPRRWLVMCNPGLAEVIAERIGEEYIADLDQLRKLLSYVDDESFIRDVAKVKQENKLKFSAYLEKEYKVHINPNSLFDIQVKRIHEYKRQLLNCLHVITLYNRIKKEPNKFFVPRTVMIGGKAAPGYHMAKMIIRLITAIGDVVNHDPVVGDRLRVIFLENYRVSLAEKVIPAADLSEQISTAGTEASGTGNMKFMLNGALTIGTMDGANVEMAEEAGEENFFIFGMRVEDVERLDQKGYNAQEYYDRIPELRHIIDQLSSGFFSPKQPDLFKDIVNMLMHHDRFKVFADYEEYVKCQERVSALYKNPREWTRMVIRNIATSGKFSSDRTIAQYAREIWGVEPTRQRMPAPDEKI.

S2 carries the post-translational modification N-acetylserine. S15 bears the Phosphoserine; by PHK; in form phosphorylase A mark. AMP contacts are provided by D43 and Y76. Y204 and Y227 each carry phosphotyrosine. 310-319 serves as a coordination point for AMP; the sequence is RRFKSSKFGC. S430 is subject to Phosphoserine. At Y473 the chain carries Phosphotyrosine. K681 is modified (N6-(pyridoxal phosphate)lysine). Phosphoserine occurs at positions 747 and 748.

It belongs to the glycogen phosphorylase family. As to quaternary structure, homodimer. Homotetramer; to form the enzymatically active phosphorylase A. Pyridoxal 5'-phosphate is required as a cofactor. In terms of processing, phosphorylation of Ser-15 converts phosphorylase B (unphosphorylated) to phosphorylase A.

The enzyme catalyses [(1-&gt;4)-alpha-D-glucosyl](n) + phosphate = [(1-&gt;4)-alpha-D-glucosyl](n-1) + alpha-D-glucose 1-phosphate. Its activity is regulated as follows. Allosterically regulated through the non-covalent binding of metabolites, being activated by AMP and inhibited by ATP, ADP, and glucose-6-phosphate. The activity is also controlled by post-translational modifications including phosphorylation. Functionally, allosteric enzyme that catalyzes the rate-limiting step in glycogen catabolism, the phosphorolytic cleavage of glycogen to produce glucose-1-phosphate, and plays a central role in maintaining cellular and organismal glucose homeostasis. The polypeptide is Glycogen phosphorylase, muscle form (Ovis aries (Sheep)).